The sequence spans 299 residues: Glycine--tRNA ligase alpha subunit (299 aa).

The protein belongs to the class-II aminoacyl-tRNA synthetase family. As to quaternary structure, tetramer of two alpha and two beta subunits.

It localises to the cytoplasm. It carries out the reaction tRNA(Gly) + glycine + ATP = glycyl-tRNA(Gly) + AMP + diphosphate. This Dictyoglomus thermophilum (strain ATCC 35947 / DSM 3960 / H-6-12) protein is Glycine--tRNA ligase alpha subunit.